Consider the following 308-residue polypeptide: uncharacterized protein (308 aa).

NADP(+)-binding residues include Leu50, Asp90, Asn117, Tyr182, Lys186, Ile222, and Thr224. The active-site Proton acceptor is Tyr182. Lys186 functions as the Lowers pKa of active site Tyr in the catalytic mechanism.

It belongs to the short-chain dehydrogenases/reductases (SDR) family.

This is an uncharacterized protein from Saccharomyces cerevisiae (strain ATCC 204508 / S288c) (Baker's yeast).